Reading from the N-terminus, the 200-residue chain is LexA repressor (200 aa).

The H-T-H motif DNA-binding region spans 29–48; sequence IRDIARAFRITPRGAIVHLN. Active-site for autocatalytic cleavage activity residues include Ser120 and Lys158.

This sequence belongs to the peptidase S24 family. Homodimer.

It carries out the reaction Hydrolysis of Ala-|-Gly bond in repressor LexA.. Functionally, represses a number of genes involved in the response to DNA damage (SOS response), including recA and lexA. In the presence of single-stranded DNA, RecA interacts with LexA causing an autocatalytic cleavage which disrupts the DNA-binding part of LexA, leading to derepression of the SOS regulon and eventually DNA repair. The polypeptide is LexA repressor (Pseudothermotoga lettingae (strain ATCC BAA-301 / DSM 14385 / NBRC 107922 / TMO) (Thermotoga lettingae)).